We begin with the raw amino-acid sequence, 204 residues long: Twist-related protein 1 (204 aa).

The span at 1–18 shows a compositional bias: low complexity; it reads MMQDVSSSPVSPADDSLS. The disordered stretch occupies residues 1-107; the sequence is MMQDVSSSPV…GGGSPQSYEE (107 aa). The segment covering 34–43 has biased composition (basic residues); it reads RGGRKRRSSR. 2 stretches are compositionally biased toward gly residues: residues 46-65 and 80-101; these read AGGGAGPGGAAGGGVGGGDE and GCGGGGSAGGGGGGGSSSGGGS. Residues 110-161 form the bHLH domain; the sequence is TQRVMANVRERQRTQSLNEAFAALRKIIPTLPSDKLSKIQTLKLAARYIDFL. The tract at residues 163 to 193 is sufficient for transactivation activity; it reads QVLQSDELDSKMASCSYVAHERFSYAFSVWR.

Efficient DNA binding requires dimerization with another bHLH protein. Homodimer or heterodimer with E proteins such as TCF3. ID1 binds preferentially to TCF3 but does not interact efficiently with TWIST1 so ID1 levels control the amount of TCF3 available to dimerize with TWIST and thus determine the type of dimer formed.

It localises to the nucleus. In terms of biological role, acts as a transcriptional regulator. Inhibits myogenesis by sequestrating E proteins, inhibiting trans-activation by MEF2, and inhibiting DNA-binding by MYOD1 through physical interaction. This interaction probably involves the basic domains of both proteins. Also represses expression of pro-inflammatory cytokines such as TNFA and IL1B. Regulates cranial suture patterning and fusion. Activates transcription as a heterodimer with E proteins. Regulates gene expression differentially, depending on dimer composition. Homodimers induce expression of FGFR2 and POSTN while heterodimers repress FGFR2 and POSTN expression and induce THBS1 expression. Heterodimerization is also required for osteoblast differentiation. Represses the activity of the circadian transcriptional activator: NPAS2-BMAL1 heterodimer. The chain is Twist-related protein 1 (TWIST1) from Nomascus concolor (Black crested gibbon).